We begin with the raw amino-acid sequence, 416 residues long: Serine/threonine transporter SstT (416 aa).

The next 9 helical transmembrane spans lie at 15–35 (SLVS…MFMP), 49–69 (VGAL…AAII), 82–102 (ILLL…VASF), 141–161 (ALMD…GIAM), 192–212 (LGIL…ALFG), 217–237 (LVVL…IIVF), 288–308 (VSIP…ITVL), 330–350 (VVAT…LLLI), and 356–376 (LFGI…IIGV).

The protein belongs to the dicarboxylate/amino acid:cation symporter (DAACS) (TC 2.A.23) family.

Its subcellular location is the cell inner membrane. The enzyme catalyses L-serine(in) + Na(+)(in) = L-serine(out) + Na(+)(out). The catalysed reaction is L-threonine(in) + Na(+)(in) = L-threonine(out) + Na(+)(out). In terms of biological role, involved in the import of serine and threonine into the cell, with the concomitant import of sodium (symport system). This is Serine/threonine transporter SstT from Aeromonas salmonicida (strain A449).